Consider the following 123-residue polypeptide: UPF0102 protein Fjoh_1217 (123 aa).

It belongs to the UPF0102 family.

This Flavobacterium johnsoniae (strain ATCC 17061 / DSM 2064 / JCM 8514 / BCRC 14874 / CCUG 350202 / NBRC 14942 / NCIMB 11054 / UW101) (Cytophaga johnsonae) protein is UPF0102 protein Fjoh_1217.